The sequence spans 364 residues: Dihydroorotate dehydrogenase (quinone) (364 aa).

FMN is bound by residues 61 to 65 (AGYDK) and threonine 85. Lysine 65 lines the substrate pocket. A substrate-binding site is contributed by 110–114 (NRLGF). The FMN site is built by asparagine 139 and asparagine 170. Asparagine 170 lines the substrate pocket. Residue serine 173 is the Nucleophile of the active site. Residue asparagine 175 coordinates substrate. FMN is bound by residues lysine 215 and serine 243. 244–245 (NT) contributes to the substrate binding site. Residues glycine 266, glycine 295, and 316-317 (YT) contribute to the FMN site.

The protein belongs to the dihydroorotate dehydrogenase family. Type 2 subfamily. Monomer. Requires FMN as cofactor.

The protein resides in the cell membrane. The catalysed reaction is (S)-dihydroorotate + a quinone = orotate + a quinol. Its pathway is pyrimidine metabolism; UMP biosynthesis via de novo pathway; orotate from (S)-dihydroorotate (quinone route): step 1/1. Functionally, catalyzes the conversion of dihydroorotate to orotate with quinone as electron acceptor. The sequence is that of Dihydroorotate dehydrogenase (quinone) from Brucella anthropi (strain ATCC 49188 / DSM 6882 / CCUG 24695 / JCM 21032 / LMG 3331 / NBRC 15819 / NCTC 12168 / Alc 37) (Ochrobactrum anthropi).